Here is a 247-residue protein sequence, read N- to C-terminus: NH(3)-dependent NAD(+) synthetase (247 aa).

Glycine 29–serine 36 lines the ATP pocket. Aspartate 35 serves as a coordination point for Mg(2+). Arginine 112 provides a ligand contact to deamido-NAD(+). An ATP-binding site is contributed by threonine 132. Glutamate 137 is a binding site for Mg(2+). The deamido-NAD(+) site is built by lysine 145 and aspartate 152. ATP-binding residues include lysine 161 and serine 183. Histidine 233–lysine 234 lines the deamido-NAD(+) pocket.

This sequence belongs to the NAD synthetase family. As to quaternary structure, homodimer.

The catalysed reaction is deamido-NAD(+) + NH4(+) + ATP = AMP + diphosphate + NAD(+) + H(+). The protein operates within cofactor biosynthesis; NAD(+) biosynthesis; NAD(+) from deamido-NAD(+) (ammonia route): step 1/1. Catalyzes the ATP-dependent amidation of deamido-NAD to form NAD. Uses ammonia as a nitrogen source. The protein is NH(3)-dependent NAD(+) synthetase of Archaeoglobus fulgidus (strain ATCC 49558 / DSM 4304 / JCM 9628 / NBRC 100126 / VC-16).